Here is a 134-residue protein sequence, read N- to C-terminus: Retinol-binding protein 2 (134 aa).

Positions 41 and 109 each coordinate all-trans-retinol.

It belongs to the calycin superfamily. Fatty-acid binding protein (FABP) family. In terms of tissue distribution, higher expression in adult small intestine and to a much lesser extent in fetal kidney.

It localises to the cytoplasm. Functionally, intracellular transport of retinol. This is Retinol-binding protein 2 (RBP2) from Homo sapiens (Human).